The sequence spans 91 residues: Large ribosomal subunit protein eL34 (91 aa).

The protein belongs to the eukaryotic ribosomal protein eL34 family.

The polypeptide is Large ribosomal subunit protein eL34 (Thermofilum pendens (strain DSM 2475 / Hrk 5)).